The sequence spans 162 residues: MLDNAIPQGFEDAVELRRKNRETVVKYMNTKGQDRLRRHELFVEDGCGGLWTTDTGSPIVIRGKDKLAEHAVWSLKCFPDWEWYNIKVFETDDPNHFWVECDGHGKILFPGYPEGYYENHFLHSFELDDGKIKRNREFMNVFQQLRALSIPVPQIKREGIPT.

The residue at position 91 (Thr-91) is a Phosphothreonine.

It belongs to the PhzA/PhzB family.

Involved in the biosynthesis of the antibiotic phenazine, a nitrogen-containing heterocyclic molecule having important roles in virulence, competition and biological control. This Pseudomonas aeruginosa (strain UCBPP-PA14) protein is Phenazine biosynthesis protein PhzB 2 (phzB2).